The sequence spans 185 residues: Ribosome-recycling factor (185 aa).

This sequence belongs to the RRF family.

The protein localises to the cytoplasm. Functionally, responsible for the release of ribosomes from messenger RNA at the termination of protein biosynthesis. May increase the efficiency of translation by recycling ribosomes from one round of translation to another. This is Ribosome-recycling factor from Mannheimia succiniciproducens (strain KCTC 0769BP / MBEL55E).